Consider the following 185-residue polypeptide: Transcription termination/antitermination protein NusG (185 aa).

The 31-residue stretch at V134 to V164 folds into the KOW domain.

This sequence belongs to the NusG family.

In terms of biological role, participates in transcription elongation, termination and antitermination. In Lactococcus lactis subsp. lactis (strain IL1403) (Streptococcus lactis), this protein is Transcription termination/antitermination protein NusG.